A 100-amino-acid polypeptide reads, in one-letter code: Small ribosomal subunit protein bS6 (100 aa).

The protein belongs to the bacterial ribosomal protein bS6 family.

In terms of biological role, binds together with bS18 to 16S ribosomal RNA. The protein is Small ribosomal subunit protein bS6 of Tropheryma whipplei (strain Twist) (Whipple's bacillus).